A 354-amino-acid polypeptide reads, in one-letter code: Guanine nucleotide-binding protein G(o) subunit alpha (354 aa).

The N-myristoyl glycine moiety is linked to residue Gly-2. Cys-3 carries S-palmitoyl cysteine lipidation. A G-alpha domain is found at 32–354 (KDIKLLLLGA…ANNLRGCGLY (323 aa)). The G1 motif stretch occupies residues 35–48 (KLLLLGAGESGKST). GTP-binding positions include 40–47 (GAGESGKS), 176–182 (LRTRVKT), 201–205 (DVGGQ), 270–273 (NKKD), and Ala-326. Residues Ser-47 and Thr-182 each coordinate Mg(2+). Residues 174–182 (DILRTRVKT) form a G2 motif region. Residues 197-206 (FKLFDVGGQR) form a G3 motif region. Residues 266-273 (ILFLNKKD) are G4 motif. The segment at 324-329 (TCATDT) is G5 motif.

The protein belongs to the G-alpha family. G(i/o/t/z) subfamily. As to quaternary structure, g proteins are composed of 3 units; alpha, beta and gamma. The alpha chain contains the guanine nucleotide binding site.

In terms of biological role, guanine nucleotide-binding proteins (G proteins) are involved as modulators or transducers in various transmembrane signaling systems. The G(o) protein function is not clear. The sequence is that of Guanine nucleotide-binding protein G(o) subunit alpha from Locusta migratoria (Migratory locust).